The following is a 269-amino-acid chain: Diaminopimelate epimerase (269 aa).

Substrate-binding residues include Asn-15, Gln-49, and Asn-66. Catalysis depends on Cys-75, which acts as the Proton donor. Substrate contacts are provided by residues Gly-76–Asn-77, Asn-155, Asn-187, and Glu-204–Arg-205. Catalysis depends on Cys-213, which acts as the Proton acceptor. Position 214–215 (Gly-214–Ser-215) interacts with substrate.

The protein belongs to the diaminopimelate epimerase family. In terms of assembly, homodimer.

It is found in the cytoplasm. The catalysed reaction is (2S,6S)-2,6-diaminopimelate = meso-2,6-diaminopimelate. Its pathway is amino-acid biosynthesis; L-lysine biosynthesis via DAP pathway; DL-2,6-diaminopimelate from LL-2,6-diaminopimelate: step 1/1. In terms of biological role, catalyzes the stereoinversion of LL-2,6-diaminopimelate (L,L-DAP) to meso-diaminopimelate (meso-DAP), a precursor of L-lysine and an essential component of the bacterial peptidoglycan. This is Diaminopimelate epimerase from Rickettsia bellii (strain OSU 85-389).